We begin with the raw amino-acid sequence, 317 residues long: 4-hydroxy-3-methylbut-2-enyl diphosphate reductase (317 aa).

Cys-12 is a [4Fe-4S] cluster binding site. Positions 41 and 74 each coordinate (2E)-4-hydroxy-3-methylbut-2-enyl diphosphate. His-41 and His-74 together coordinate dimethylallyl diphosphate. Positions 41 and 74 each coordinate isopentenyl diphosphate. Residue Cys-97 participates in [4Fe-4S] cluster binding. His-125 contributes to the (2E)-4-hydroxy-3-methylbut-2-enyl diphosphate binding site. Dimethylallyl diphosphate is bound at residue His-125. His-125 lines the isopentenyl diphosphate pocket. The active-site Proton donor is Glu-127. Thr-168 is a binding site for (2E)-4-hydroxy-3-methylbut-2-enyl diphosphate. Residue Cys-198 participates in [4Fe-4S] cluster binding. Positions 226, 227, 228, and 270 each coordinate (2E)-4-hydroxy-3-methylbut-2-enyl diphosphate. Residues Ser-226, Ser-227, Asn-228, and Ser-270 each coordinate dimethylallyl diphosphate. The isopentenyl diphosphate site is built by Ser-226, Ser-227, Asn-228, and Ser-270.

The protein belongs to the IspH family. As to quaternary structure, homodimer. Requires [4Fe-4S] cluster as cofactor.

The enzyme catalyses isopentenyl diphosphate + 2 oxidized [2Fe-2S]-[ferredoxin] + H2O = (2E)-4-hydroxy-3-methylbut-2-enyl diphosphate + 2 reduced [2Fe-2S]-[ferredoxin] + 2 H(+). It catalyses the reaction dimethylallyl diphosphate + 2 oxidized [2Fe-2S]-[ferredoxin] + H2O = (2E)-4-hydroxy-3-methylbut-2-enyl diphosphate + 2 reduced [2Fe-2S]-[ferredoxin] + 2 H(+). It functions in the pathway isoprenoid biosynthesis; dimethylallyl diphosphate biosynthesis; dimethylallyl diphosphate from (2E)-4-hydroxy-3-methylbutenyl diphosphate: step 1/1. The protein operates within isoprenoid biosynthesis; isopentenyl diphosphate biosynthesis via DXP pathway; isopentenyl diphosphate from 1-deoxy-D-xylulose 5-phosphate: step 6/6. Functionally, catalyzes the conversion of 1-hydroxy-2-methyl-2-(E)-butenyl 4-diphosphate (HMBPP) into a mixture of isopentenyl diphosphate (IPP) and dimethylallyl diphosphate (DMAPP). Acts in the terminal step of the DOXP/MEP pathway for isoprenoid precursor biosynthesis. The protein is 4-hydroxy-3-methylbut-2-enyl diphosphate reductase of Serratia proteamaculans (strain 568).